The following is a 204-amino-acid chain: N-(5'-phosphoribosyl)anthranilate isomerase (204 aa).

The protein belongs to the TrpF family.

It carries out the reaction N-(5-phospho-beta-D-ribosyl)anthranilate = 1-(2-carboxyphenylamino)-1-deoxy-D-ribulose 5-phosphate. The protein operates within amino-acid biosynthesis; L-tryptophan biosynthesis; L-tryptophan from chorismate: step 3/5. The polypeptide is N-(5'-phosphoribosyl)anthranilate isomerase (Bacillus cereus (strain B4264)).